A 71-amino-acid polypeptide reads, in one-letter code: ADNRRPIWVMGHMVNSLAQIDEFVNLGANSIETDVSFDRNCQVLVVFDLKTGHRWQFGGITNKVLNEAAYK.

Histidine 12 is an active-site residue. Residues glutamate 32, aspartate 34, and aspartate 48 each coordinate Mg(2+).

Requires Mg(2+) as cofactor. Post-translationally, contains 2 disulfide bonds. In terms of tissue distribution, expressed by the venom gland.

The protein localises to the secreted. It carries out the reaction an N-(acyl)-sphingosylphosphocholine = an N-(acyl)-sphingosyl-1,3-cyclic phosphate + choline. It catalyses the reaction an N-(acyl)-sphingosylphosphoethanolamine = an N-(acyl)-sphingosyl-1,3-cyclic phosphate + ethanolamine. The catalysed reaction is a 1-acyl-sn-glycero-3-phosphocholine = a 1-acyl-sn-glycero-2,3-cyclic phosphate + choline. The enzyme catalyses a 1-acyl-sn-glycero-3-phosphoethanolamine = a 1-acyl-sn-glycero-2,3-cyclic phosphate + ethanolamine. Catalyzes the hydrolysis of sphingomyelin. May also act on other phosphatidyl esters. Its function is as follows. Dermonecrotic toxins cleave the phosphodiester linkage between the phosphate and headgroup of certain phospholipids (sphingolipid and lysolipid substrates), forming an alcohol (often choline) and a cyclic phosphate. This toxin acts on sphingomyelin (SM). It may also act on ceramide phosphoethanolamine (CPE), lysophosphatidylcholine (LPC) and lysophosphatidylethanolamine (LPE), but not on lysophosphatidylserine (LPS), and lysophosphatidylglycerol (LPG). It acts by transphosphatidylation, releasing exclusively cyclic phosphate products as second products. In vivo, induces dermonecrosis, but is not lethal. Induces hemolysis, vascular permeability, edema, inflammatory response, and platelet aggregation. This is Dermonecrotic toxin LgSicTox-alphaI-Loxn-A from Loxosceles gaucho (Spider).